The chain runs to 313 residues: 2,3-dihydroxyphenylpropionate/2,3-dihydroxicinnamic acid 1,2-dioxygenase (313 aa).

H115 functions as the Proton donor in the catalytic mechanism. Residue H179 is the Proton acceptor of the active site.

It belongs to the LigB/MhpB extradiol dioxygenase family. In terms of assembly, homotetramer. Requires Fe(2+) as cofactor.

It carries out the reaction 3-(2,3-dihydroxyphenyl)propanoate + O2 = (2Z,4E)-2-hydroxy-6-oxonona-2,4-dienedioate + H(+). The catalysed reaction is (2E)-3-(2,3-dihydroxyphenyl)prop-2-enoate + O2 = (2Z,4E,7E)-2-hydroxy-6-oxonona-2,4,7-trienedioate + H(+). It functions in the pathway aromatic compound metabolism; 3-phenylpropanoate degradation. Functionally, catalyzes the non-heme iron(II)-dependent oxidative cleavage of 2,3-dihydroxyphenylpropionic acid and 2,3-dihydroxicinnamic acid into 2-hydroxy-6-ketononadienedioate and 2-hydroxy-6-ketononatrienedioate, respectively. The chain is 2,3-dihydroxyphenylpropionate/2,3-dihydroxicinnamic acid 1,2-dioxygenase from Xanthobacter autotrophicus (strain ATCC BAA-1158 / Py2).